A 284-amino-acid chain; its full sequence is Bifunctional protein FolD (284 aa).

Residues 165–167 (GRS), Ser-190, and Ile-231 contribute to the NADP(+) site.

Belongs to the tetrahydrofolate dehydrogenase/cyclohydrolase family. As to quaternary structure, homodimer.

It carries out the reaction (6R)-5,10-methylene-5,6,7,8-tetrahydrofolate + NADP(+) = (6R)-5,10-methenyltetrahydrofolate + NADPH. It catalyses the reaction (6R)-5,10-methenyltetrahydrofolate + H2O = (6R)-10-formyltetrahydrofolate + H(+). Its pathway is one-carbon metabolism; tetrahydrofolate interconversion. In terms of biological role, catalyzes the oxidation of 5,10-methylenetetrahydrofolate to 5,10-methenyltetrahydrofolate and then the hydrolysis of 5,10-methenyltetrahydrofolate to 10-formyltetrahydrofolate. The chain is Bifunctional protein FolD from Lysinibacillus sphaericus (strain C3-41).